The chain runs to 95 residues: uncharacterized protein (95 aa).

The disordered stretch occupies residues 65–95 (DANDYDTTTTEEEDSSTTTTTDNETNSDDDI).

This is an uncharacterized protein from Lymantria dispar multicapsid nuclear polyhedrosis virus (LdMNPV).